A 50-amino-acid polypeptide reads, in one-letter code: Fungus-induced protein 3 (50 aa).

This is Fungus-induced protein 3 (fip-3) from Caenorhabditis elegans.